The primary structure comprises 1201 residues: Putative disease resistance protein At4g19050 (1201 aa).

33–40 provides a ligand contact to ATP; the sequence is GEAGIGKT. 14 LRR repeats span residues 469 to 491, 492 to 514, 517 to 539, 540 to 562, 680 to 701, 703 to 725, 726 to 748, 750 to 771, 773 to 795, 796 to 818, 820 to 841, 843 to 865, 866 to 888, and 890 to 911; these read KLRV…SGLQ, GLHV…FFKN, QLQS…EKLS, MLRC…IVET, ELRI…IADV, NLNK…EKLT, HLEV…FGEM, YLHE…ISEL, NLKE…EKLT, NLEI…FENL, CLHK…ISEL, HLVI…FESM, and YLCE…PKQS. Residues 1162–1180 are compositionally biased toward basic and acidic residues; that stretch reads DEPRIGARITDEISEDQPH. The disordered stretch occupies residues 1162–1201; sequence DEPRIGARITDEISEDQPHKNTIGPETQTPTQPTKATDTV. The segment covering 1185–1201 has biased composition (polar residues); it reads GPETQTPTQPTKATDTV.

This sequence belongs to the disease resistance NB-LRR family.

Its function is as follows. Potential disease resistance protein. The sequence is that of Putative disease resistance protein At4g19050 from Arabidopsis thaliana (Mouse-ear cress).